Here is a 159-residue protein sequence, read N- to C-terminus: Transcription elongation factor A protein-like 1 (159 aa).

Residues Met1–Glu99 are disordered. Over residues Lys17–Leu34 the composition is skewed to basic and acidic residues. Over residues Gln37–Leu54 the composition is skewed to acidic residues. The segment covering Ser64–Glu80 has biased composition (basic and acidic residues).

Belongs to the TFS-II family. TFA subfamily.

It is found in the nucleus. In terms of biological role, may be involved in transcriptional regulation. Modulates various viral and cellular promoters in a promoter context-dependent manner. Does not bind DNA directly. The chain is Transcription elongation factor A protein-like 1 from Ateles geoffroyi (Black-handed spider monkey).